A 211-amino-acid chain; its full sequence is ATP phosphoribosyltransferase (211 aa).

It belongs to the ATP phosphoribosyltransferase family. Short subfamily. Heteromultimer composed of HisG and HisZ subunits.

Its subcellular location is the cytoplasm. The catalysed reaction is 1-(5-phospho-beta-D-ribosyl)-ATP + diphosphate = 5-phospho-alpha-D-ribose 1-diphosphate + ATP. It functions in the pathway amino-acid biosynthesis; L-histidine biosynthesis; L-histidine from 5-phospho-alpha-D-ribose 1-diphosphate: step 1/9. Catalyzes the condensation of ATP and 5-phosphoribose 1-diphosphate to form N'-(5'-phosphoribosyl)-ATP (PR-ATP). Has a crucial role in the pathway because the rate of histidine biosynthesis seems to be controlled primarily by regulation of HisG enzymatic activity. The sequence is that of ATP phosphoribosyltransferase from Pseudomonas aeruginosa (strain UCBPP-PA14).